A 191-amino-acid chain; its full sequence is MAP6 domain-containing protein 1 (191 aa).

Residues Cys-5, Cys-10, and Cys-11 are each lipidated (S-palmitoyl cysteine). Residues 31–106 (HGYSDPGSEE…RGQSSAPPTR (76 aa)) form a disordered region. Ser-38 and Ser-41 each carry phosphoserine. 2 mn regions span residues 123 to 136 (TTSYRQEFQAWTGV) and 158 to 170 (DPSPGASFQVPEV). Ser-160 is modified (phosphoserine).

It belongs to the STOP family. Interacts with calmodulin. Post-translationally, palmitoylated. Palmitoylation enhances association with microtubules. In terms of tissue distribution, expressed in brain. Found in neurons in primary cultures, but absent in glial cells.

The protein resides in the golgi apparatus. It localises to the cytoplasm. Its subcellular location is the cytoskeleton. In terms of biological role, may have microtubule-stabilizing activity. The sequence is that of MAP6 domain-containing protein 1 (Map6d1) from Mus musculus (Mouse).